We begin with the raw amino-acid sequence, 200 residues long: Holliday junction branch migration complex subunit RuvA (200 aa).

Residues 1–64 (MIGHLRGIIV…EDAHTLYGFH (64 aa)) are domain I. The tract at residues 65–143 (NDHERRLFRA…RWHTNDTPSP (79 aa)) is domain II. Positions 133–152 (SRWHTNDTPSPEGLRSSNTQ) are disordered. The interval 144–148 (EGLRS) is flexible linker. The tract at residues 149 to 200 (SNTQPTQDAISALMALGYKPQEAKRAIDAIQKPDLSAETLIRLALKQMVLGT) is domain III.

This sequence belongs to the RuvA family. As to quaternary structure, homotetramer. Forms an RuvA(8)-RuvB(12)-Holliday junction (HJ) complex. HJ DNA is sandwiched between 2 RuvA tetramers; dsDNA enters through RuvA and exits via RuvB. An RuvB hexamer assembles on each DNA strand where it exits the tetramer. Each RuvB hexamer is contacted by two RuvA subunits (via domain III) on 2 adjacent RuvB subunits; this complex drives branch migration. In the full resolvosome a probable DNA-RuvA(4)-RuvB(12)-RuvC(2) complex forms which resolves the HJ.

It is found in the cytoplasm. In terms of biological role, the RuvA-RuvB-RuvC complex processes Holliday junction (HJ) DNA during genetic recombination and DNA repair, while the RuvA-RuvB complex plays an important role in the rescue of blocked DNA replication forks via replication fork reversal (RFR). RuvA specifically binds to HJ cruciform DNA, conferring on it an open structure. The RuvB hexamer acts as an ATP-dependent pump, pulling dsDNA into and through the RuvAB complex. HJ branch migration allows RuvC to scan DNA until it finds its consensus sequence, where it cleaves and resolves the cruciform DNA. This Coxiella burnetii (strain Dugway 5J108-111) protein is Holliday junction branch migration complex subunit RuvA.